Here is a 393-residue protein sequence, read N- to C-terminus: Envelope glycoprotein D (393 aa).

An N-terminal signal peptide occupies residues 1 to 25 (MGRLTSGVGTAALLVVAVGLRVVCA). Residues 25–57 (AKYALADPSLKMADPNRFRGKNLPVLDRLTDPP) are interaction with TNFRSF14. Residues 26 to 339 (KYALADPSLK…HHAPAAPSNP (314 aa)) lie on the Virion surface side of the membrane. His-64 is a Zn(2+) binding site. Disulfide bonds link Cys-91–Cys-214, Cys-131–Cys-227, and Cys-143–Cys-152. N-linked (GlcNAc...) asparagine; by host glycans are attached at residues Asn-119 and Asn-146. Asp-240 lines the Zn(2+) pocket. The segment at 261–305 (LKIAGWHGPKPPYTSTLLPPELSDTTNATQPELVPEDPEDSALLE) is profusion. A compositionally biased stretch (polar residues) spans 274–290 (TSTLLPPELSDTTNATQ). The disordered stretch occupies residues 274 to 301 (TSTLLPPELSDTTNATQPELVPEDPEDS). Asn-287 carries an N-linked (GlcNAc...) asparagine; by host glycan. Residues 340 to 363 (GLIIGALAGSTLAVLVIGGIAFWV) traverse the membrane as a helical segment. The Intravirion portion of the chain corresponds to 364–393 (RRRAQMAPKRLRLPHIRDDDAPPSHQPLFY).

The protein belongs to the herpesviridae glycoprotein D family. As to quaternary structure, homodimer. Interacts with host receptor TNFRSF14. Interacts with host receptor NECTIN1. Interacts with host receptor NECTIN2. Interacts (via profusion domain) with gB; this interaction occurs in the absence of gH/gL. Interacts (via profusion domain) with gH/gL heterodimer; this interaction occurs in the absence of gB. Associates with the gB-gH/gL-gD complex. Interacts (via C-terminus) with UL11 tegument protein.

It localises to the virion membrane. In terms of biological role, envelope glycoprotein that binds to the host cell entry receptors NECTIN1, NECTIN2 and TNFRSF14/HVEM, promoting the virus entry into host cells. May trigger fusion with host membrane, by recruiting the fusion machinery composed of gB and gH/gL. The chain is Envelope glycoprotein D (gD) from Homo sapiens (Human).